Consider the following 296-residue polypeptide: MKESTVIHFPFSVRRGVWLSKYSTFRIGGPANYFKEVNSAEEAQQVIQFLYSQNYPFIIVGKGSNCLFDDQGFDGFVLYNNIQKKEFLSETTIKVYSGMSFSFLGKTLSSSGYSGLEFAVGIPGSVGGAVFMNAGIGNQDIASAIESVEAINSNGDIISYQAAELEFGYRRSRFQNSKEFILSATFRLSKSASSIQIAKDLLQNKLLSQPYQQPSAGCIFRNPPGNYAGKLIDEAGLKGLSLGGAQISSKHANFIVNNGRATSHEVKELIQIVRDKLKSQGISLEEEVRIIPYRLP.

Residues Arg26–Ser191 form the FAD-binding PCMH-type domain. Arg170 is a catalytic residue. Cys218 acts as the Proton donor in catalysis. Residue Glu287 is part of the active site.

The protein belongs to the MurB family. Requires FAD as cofactor.

The protein localises to the cytoplasm. The enzyme catalyses UDP-N-acetyl-alpha-D-muramate + NADP(+) = UDP-N-acetyl-3-O-(1-carboxyvinyl)-alpha-D-glucosamine + NADPH + H(+). The protein operates within cell wall biogenesis; peptidoglycan biosynthesis. Functionally, cell wall formation. This Chlamydia felis (strain Fe/C-56) (Chlamydophila felis) protein is UDP-N-acetylenolpyruvoylglucosamine reductase.